Reading from the N-terminus, the 429-residue chain is Adenylosuccinate synthetase (429 aa).

Residues Gly12–Lys18 and Gly40–Thr42 contribute to the GTP site. The active-site Proton acceptor is Asp13. Residues Asp13 and Gly40 each coordinate Mg(2+). IMP is bound by residues Asp13–Lys16, Asn38–His41, Thr128, Arg142, Gln223, Thr238, and Arg302. The active-site Proton donor is the His41. Thr298–Arg304 contacts substrate. GTP-binding positions include Arg304, Ser330 to Asp332, and Ser412 to Gly414.

It belongs to the adenylosuccinate synthetase family. In terms of assembly, homodimer. Mg(2+) is required as a cofactor.

It localises to the cytoplasm. It catalyses the reaction IMP + L-aspartate + GTP = N(6)-(1,2-dicarboxyethyl)-AMP + GDP + phosphate + 2 H(+). Its pathway is purine metabolism; AMP biosynthesis via de novo pathway; AMP from IMP: step 1/2. In terms of biological role, plays an important role in the de novo pathway of purine nucleotide biosynthesis. Catalyzes the first committed step in the biosynthesis of AMP from IMP. The protein is Adenylosuccinate synthetase of Exiguobacterium sp. (strain ATCC BAA-1283 / AT1b).